A 489-amino-acid polypeptide reads, in one-letter code: Phenylalanine--tRNA ligase alpha subunit (489 aa).

L-phenylalanine is bound by residues T316, 355–357 (QLD), F395, and F420.

This sequence belongs to the class-II aminoacyl-tRNA synthetase family. Phe-tRNA synthetase alpha subunit type 2 subfamily. Tetramer of two alpha and two beta subunits. Mg(2+) serves as cofactor.

The protein localises to the cytoplasm. It catalyses the reaction tRNA(Phe) + L-phenylalanine + ATP = L-phenylalanyl-tRNA(Phe) + AMP + diphosphate + H(+). The sequence is that of Phenylalanine--tRNA ligase alpha subunit from Pyrobaculum aerophilum (strain ATCC 51768 / DSM 7523 / JCM 9630 / CIP 104966 / NBRC 100827 / IM2).